The chain runs to 291 residues: Small ribosomal subunit biogenesis GTPase RsgA 2 (291 aa).

Positions 63 to 221 (ENALVRPPVA…VADTPGFSSI (159 aa)) constitute a CP-type G domain. GTP is bound by residues 112-115 (SKMD) and 164-172 (GQSGVGKST). Zn(2+) is bound by residues cysteine 245, cysteine 250, histidine 252, and cysteine 258.

This sequence belongs to the TRAFAC class YlqF/YawG GTPase family. RsgA subfamily. Monomer. Associates with 30S ribosomal subunit, binds 16S rRNA. Requires Zn(2+) as cofactor.

Its subcellular location is the cytoplasm. In terms of biological role, one of several proteins that assist in the late maturation steps of the functional core of the 30S ribosomal subunit. Helps release RbfA from mature subunits. May play a role in the assembly of ribosomal proteins into the subunit. Circularly permuted GTPase that catalyzes slow GTP hydrolysis, GTPase activity is stimulated by the 30S ribosomal subunit. The polypeptide is Small ribosomal subunit biogenesis GTPase RsgA 2 (Listeria innocua serovar 6a (strain ATCC BAA-680 / CLIP 11262)).